The primary structure comprises 444 residues: Argininosuccinate synthase (444 aa).

ATP contacts are provided by residues 17–25 and Ala43; that span reads AFSGGLDTS. Tyr99 is a binding site for L-citrulline. Residues Gly129 and Thr131 each contribute to the ATP site. 3 residues coordinate L-aspartate: Thr131, Asn135, and Asp136. L-citrulline is bound at residue Asn135. Position 136 (Asp136) interacts with ATP. Arg139 and Ser192 together coordinate L-citrulline. Residue Asp194 participates in ATP binding. Positions 201, 203, and 280 each coordinate L-citrulline.

The protein belongs to the argininosuccinate synthase family. Type 2 subfamily. Homotetramer.

Its subcellular location is the cytoplasm. The enzyme catalyses L-citrulline + L-aspartate + ATP = 2-(N(omega)-L-arginino)succinate + AMP + diphosphate + H(+). It functions in the pathway amino-acid biosynthesis; L-arginine biosynthesis; L-arginine from L-ornithine and carbamoyl phosphate: step 2/3. The protein is Argininosuccinate synthase of Burkholderia lata (strain ATCC 17760 / DSM 23089 / LMG 22485 / NCIMB 9086 / R18194 / 383).